The sequence spans 290 residues: Eukaryotic translation initiation factor 3 subunit F-2 (290 aa).

An MPN domain is found at 12-150 (VRLQPLVLFQ…TRLYCGVTMG (139 aa)).

This sequence belongs to the eIF-3 subunit F family. In terms of assembly, component of the eukaryotic translation initiation factor 3 (eIF-3) complex. The eIF-3 complex interacts with pix.

It is found in the cytoplasm. Functionally, component of the eukaryotic translation initiation factor 3 (eIF-3) complex, which is involved in protein synthesis of a specialized repertoire of mRNAs and, together with other initiation factors, stimulates binding of mRNA and methionyl-tRNAi to the 40S ribosome. The eIF-3 complex specifically targets and initiates translation of a subset of mRNAs involved in cell proliferation. The sequence is that of Eukaryotic translation initiation factor 3 subunit F-2 from Drosophila virilis (Fruit fly).